The sequence spans 156 residues: Peptidyl-prolyl cis-trans isomerase H (156 aa).

The region spanning 1–155 (TPAGRLKCEL…MAVRITQCGE (155 aa)) is the PPIase cyclophilin-type domain.

This sequence belongs to the cyclophilin-type PPIase family. PPIase H subfamily.

The protein resides in the nucleus. The catalysed reaction is [protein]-peptidylproline (omega=180) = [protein]-peptidylproline (omega=0). Functionally, PPIases accelerate the folding of proteins. It catalyzes the cis-trans isomerization of proline imidic peptide bonds in oligopeptides. The sequence is that of Peptidyl-prolyl cis-trans isomerase H (CYP3) from Mycosarcoma maydis (Corn smut fungus).